We begin with the raw amino-acid sequence, 133 residues long: Putative nickel-responsive regulator (133 aa).

Residues His-74, His-85, His-87, and Cys-93 each contribute to the Ni(2+) site.

This sequence belongs to the transcriptional regulatory CopG/NikR family. The cofactor is Ni(2+).

Transcriptional regulator. This Saccharolobus islandicus (strain Y.N.15.51 / Yellowstone #2) (Sulfolobus islandicus) protein is Putative nickel-responsive regulator.